Consider the following 334-residue polypeptide: UDP-glucose 4-epimerase (334 aa).

NAD(+)-binding positions include 11 to 12 (YI), 31 to 36 (DNLQKG), 50 to 51 (DI), 72 to 76 (FAANS), Asn-91, Thr-116, Tyr-140, Lys-144, and Phe-168. Substrate is bound by residues Thr-116 and Tyr-140. Catalysis depends on Tyr-140, which acts as the Proton acceptor. Residues Asn-169, 188–189 (HL), 205–207 (AIF), Arg-220, and 281–284 (RSGD) each bind substrate.

This sequence belongs to the NAD(P)-dependent epimerase/dehydratase family. In terms of assembly, homodimer. NAD(+) is required as a cofactor.

The catalysed reaction is UDP-alpha-D-glucose = UDP-alpha-D-galactose. The protein operates within carbohydrate metabolism; galactose metabolism. Involved in the metabolism of galactose. Catalyzes the conversion of UDP-galactose (UDP-Gal) to UDP-glucose (UDP-Glc) through a mechanism involving the transient reduction of NAD. The polypeptide is UDP-glucose 4-epimerase (galE) (Halalkalibacterium halodurans (strain ATCC BAA-125 / DSM 18197 / FERM 7344 / JCM 9153 / C-125) (Bacillus halodurans)).